Reading from the N-terminus, the 320-residue chain is Olfactory receptor 51E2 (320 aa).

Over 1–24 the chain is Extracellular; sequence MSSCNFTHATFMLIGIPGLEEAHF. Residue Asn5 is glycosylated (N-linked (GlcNAc...) asparagine). The helical transmembrane segment at 25 to 45 threads the bilayer; it reads WFGFPLLSMYAVALFGNCIVV. The Cytoplasmic portion of the chain corresponds to 46–53; sequence FIVRTERS. The helical transmembrane segment at 54–74 threads the bilayer; the sequence is LHAPMYLFLCMLAAIDLALST. Topologically, residues 75-98 are extracellular; it reads STMPKILALFWFDSREITFDACLA. Cysteines 96 and 178 form a disulfide. A helical membrane pass occupies residues 99–119; the sequence is QMFFIHALSAIESTILLAMAF. The Cytoplasmic portion of the chain corresponds to 120 to 138; it reads DRYVAICHPLRHAAVLNNT. A helical transmembrane segment spans residues 139–159; sequence VTVQIGMVALVRGSLFFFPLP. At 160 to 195 the chain is on the extracellular side; sequence LLIKRLAFCHSNVLSHSYCVHQDVMKLAYTDTLPNV. A helical transmembrane segment spans residues 196–216; sequence VYGLTAILLVMGVDVMFISLS. The Cytoplasmic segment spans residues 217 to 236; it reads YFLIIRAVLQLPSKSERAKA. A helical transmembrane segment spans residues 237 to 257; the sequence is FGTCVSHIGVVLAFYVPLIGL. The Extracellular portion of the chain corresponds to 258-272; it reads SVVHRFGNSLDPIVH. Residues 273–293 form a helical membrane-spanning segment; it reads VLMGDVYLLLPPVINPIIYGA. The Cytoplasmic portion of the chain corresponds to 294 to 320; it reads KTKQIRTRVLAMFKISCDKDIEAGGNT.

The protein belongs to the G-protein coupled receptor 1 family. In terms of tissue distribution, expressed in brain and liver. Expressed only in some areas of the brain and in the olfactory epithelium.

The protein resides in the cell membrane. It is found in the early endosome membrane. Olfactory receptor. The activity of this receptor is probably mediated by G-proteins which induce elevation of intracellular Ca(2+), cAMP and activation of phosphorylation of the protein kinases PKA and MAPK3/MAPK1. Activation of OR51E2 may affect melanocyte proliferation, differentiation, and melanogenesis and may increase proliferation and migration of primary retinal pigment epithelial (RPE) cells. Activated by the short chain fatty acids (SCFA), acetate and propionate. In response to SCFA, may positively regulate renin secretion and increase blood pressure. May also be activated by steroid hormones and regulate cell proliferation. Activated by L-lactate in glomus cells. This chain is Olfactory receptor 51E2 (Or51e2), found in Rattus norvegicus (Rat).